We begin with the raw amino-acid sequence, 388 residues long: Putative nickel insertion protein (388 aa).

This sequence belongs to the LarC family.

The polypeptide is Putative nickel insertion protein (Geobacter sulfurreducens (strain ATCC 51573 / DSM 12127 / PCA)).